A 127-amino-acid polypeptide reads, in one-letter code: Large ribosomal subunit protein bL20 (127 aa).

It belongs to the bacterial ribosomal protein bL20 family.

In terms of biological role, binds directly to 23S ribosomal RNA and is necessary for the in vitro assembly process of the 50S ribosomal subunit. It is not involved in the protein synthesizing functions of that subunit. This chain is Large ribosomal subunit protein bL20, found in Corynebacterium jeikeium (strain K411).